A 1169-amino-acid polypeptide reads, in one-letter code: Polyamine-transporting ATPase 13A2 (1169 aa).

The Cytoplasmic segment spans residues Met1 to Pro44. Residues Trp45–Phe65 lie within the membrane without spanning it. The Cytoplasmic segment spans residues Arg66 to Gln225. The chain crosses the membrane as a helical span at residues Leu226 to Trp246. The Lumenal segment spans residues Leu247–His250. A helical membrane pass occupies residues Tyr251–Tyr271. Residues Lys272–Lys422 are Cytoplasmic-facing. A helical transmembrane segment spans residues Phe423–Tyr443. Topologically, residues Arg444 to Asp458 are lumenal. A helical transmembrane segment spans residues Leu459–Ala479. The Cytoplasmic portion of the chain corresponds to Gln480–Ser919. Asp508 serves as the catalytic 4-aspartylphosphate intermediate. The Mg(2+) site is built by Asp867 and Asp871. Residues Phe920–Leu940 form a helical membrane-spanning segment. The Lumenal segment spans residues Tyr941–Asn946. Residues Leu947–Met967 form a helical membrane-spanning segment. Topologically, residues Ser968–Ser993 are cytoplasmic. Residues Leu994–Ala1014 traverse the membrane as a helical segment. Residues Gln1015–Thr1037 are Lumenal-facing. The N-linked (GlcNAc...) asparagine glycan is linked to Asn1022. The chain crosses the membrane as a helical span at residues Val1038–Ala1058. Topologically, residues Pro1059–Pro1069 are cytoplasmic. A helical membrane pass occupies residues Phe1070–Leu1090. Over Leu1091–Lys1106 the chain is Lumenal. Residues Leu1107–Leu1127 traverse the membrane as a helical segment. At Asp1128–Arg1169 the chain is on the cytoplasmic side.

It belongs to the cation transport ATPase (P-type) (TC 3.A.3) family. Type V subfamily. Interacts with MYCBP2; the interaction inhibits the ubiquitination of TSC2 by MYCBP2. Interacts with HDAC6; the interaction results in recruitment of HDAC6 to lysosomes to promote CTTN deacetylation. In terms of processing, autophosphorylated. Accumulates in an inactive autophosphorylated state and autophosphorylation is stimulated by phosphatidic acid and phosphatidylinositol 3,5-bisphosphate but not by Mn(2+) or Zn(2+). The presence of spermine results in a dose-dependent reduction in autophosphorylation.

The protein resides in the lysosome membrane. It is found in the late endosome membrane. Its subcellular location is the endosome. It localises to the multivesicular body membrane. The protein localises to the cytoplasmic vesicle. The protein resides in the autophagosome membrane. The enzyme catalyses spermidine(out) + ATP + H2O = spermidine(in) + ADP + phosphate + H(+). It catalyses the reaction spermine(out) + ATP + H2O = spermine(in) + ADP + phosphate + H(+). With respect to regulation, accumulates in an inactive autophosphorylated state. The presence of spermine results in a dose-dependent reduction in autophosphorylation. In terms of biological role, ATPase which acts as a lysosomal polyamine exporter with high affinity for spermine. Also stimulates cellular uptake of polyamines and protects against polyamine toxicity. Plays a role in intracellular cation homeostasis and the maintenance of neuronal integrity. Contributes to cellular zinc homeostasis. Confers cellular protection against Mn(2+) and Zn(2+) toxicity and mitochondrial stress. Required for proper lysosomal and mitochondrial maintenance. Regulates the autophagy-lysosome pathway through the control of SYT11 expression at both transcriptional and post-translational levels. Facilitates recruitment of deacetylase HDAC6 to lysosomes to deacetylate CTTN, leading to actin polymerization, promotion of autophagosome-lysosome fusion and completion of autophagy. Promotes secretion of exosomes as well as secretion of SCNA via exosomes. Plays a role in lipid homeostasis. This Mus musculus (Mouse) protein is Polyamine-transporting ATPase 13A2.